The sequence spans 355 residues: UDP-N-acetylglucosamine--N-acetylmuramyl-(pentapeptide) pyrophosphoryl-undecaprenol N-acetylglucosamine transferase (355 aa).

Residues 15 to 17 (TGG), Asn-127, Arg-163, Ser-191, Ile-244, 263 to 268 (ALTVSE), and Gln-288 each bind UDP-N-acetyl-alpha-D-glucosamine.

The protein belongs to the glycosyltransferase 28 family. MurG subfamily.

It localises to the cell inner membrane. The enzyme catalyses di-trans,octa-cis-undecaprenyl diphospho-N-acetyl-alpha-D-muramoyl-L-alanyl-D-glutamyl-meso-2,6-diaminopimeloyl-D-alanyl-D-alanine + UDP-N-acetyl-alpha-D-glucosamine = di-trans,octa-cis-undecaprenyl diphospho-[N-acetyl-alpha-D-glucosaminyl-(1-&gt;4)]-N-acetyl-alpha-D-muramoyl-L-alanyl-D-glutamyl-meso-2,6-diaminopimeloyl-D-alanyl-D-alanine + UDP + H(+). It functions in the pathway cell wall biogenesis; peptidoglycan biosynthesis. Its function is as follows. Cell wall formation. Catalyzes the transfer of a GlcNAc subunit on undecaprenyl-pyrophosphoryl-MurNAc-pentapeptide (lipid intermediate I) to form undecaprenyl-pyrophosphoryl-MurNAc-(pentapeptide)GlcNAc (lipid intermediate II). The protein is UDP-N-acetylglucosamine--N-acetylmuramyl-(pentapeptide) pyrophosphoryl-undecaprenol N-acetylglucosamine transferase of Salmonella gallinarum (strain 287/91 / NCTC 13346).